The following is a 661-amino-acid chain: mRNA 3'-end-processing protein RNA14 (661 aa).

The disordered stretch occupies residues 1–37; the sequence is MSGNETPDAGTVKSVSPSSGGSSLPARPTLRERDPND. Residues 14–23 show a composition bias toward low complexity; that stretch reads SVSPSSGGSS. 7 HAT repeats span residues 67–99, 101–135, 149–181, 192–225, 262–298, 307–339, and 513–548; these read QQVA…WELE, EESG…YVRR, TVLK…FLEQ, SRVE…WEQE, SLPT…WELD, VLRQ…FVDE, and YNLD…FFEK.

It localises to the nucleus. It is found in the cytoplasm. Functionally, component of the cleavage factor IA (CFIA) complex, which is involved in the endonucleolytic cleavage during polyadenylation-dependent pre-mRNA 3'-end formation. The polypeptide is mRNA 3'-end-processing protein RNA14 (RNA14) (Eremothecium gossypii (strain ATCC 10895 / CBS 109.51 / FGSC 9923 / NRRL Y-1056) (Yeast)).